The primary structure comprises 836 residues: Translation initiation factor IF-2 (836 aa).

The disordered stretch occupies residues 1–233; that stretch reads MSDTDGKKPL…RSLAAMKRKQ (233 aa). Positions 18 to 27 are enriched in polar residues; it reads SGQVKQSFSH. Residues 50–60 show a composition bias toward low complexity; sequence SGSSTTTSSPS. The segment covering 88–156 has biased composition (basic and acidic residues); that stretch reads KLREVEDAKR…AARRAEEAKR (69 aa). Positions 167-176 are enriched in low complexity; the sequence is PAESRASAPP. The span at 185-206 shows a compositional bias: basic and acidic residues; sequence SRKEREREADRDRTTKKDDSRR. Positions 333 to 501 constitute a tr-type G domain; that stretch reads PRPPIITIMG…NIALQAEILD (169 aa). The G1 stretch occupies residues 342 to 349; the sequence is GHVDHGKT. Residue 342–349 coordinates GTP; that stretch reads GHVDHGKT. The interval 367 to 371 is G2; that stretch reads GITQH. The G3 stretch occupies residues 389 to 392; it reads DTPG. GTP contacts are provided by residues 389–393 and 443–446; these read DTPGH and NKID. Positions 443 to 446 are G4; the sequence is NKID. The interval 479 to 481 is G5; the sequence is SAK.

It belongs to the TRAFAC class translation factor GTPase superfamily. Classic translation factor GTPase family. IF-2 subfamily.

It localises to the cytoplasm. One of the essential components for the initiation of protein synthesis. Protects formylmethionyl-tRNA from spontaneous hydrolysis and promotes its binding to the 30S ribosomal subunits. Also involved in the hydrolysis of GTP during the formation of the 70S ribosomal complex. In Cereibacter sphaeroides (strain ATCC 17023 / DSM 158 / JCM 6121 / CCUG 31486 / LMG 2827 / NBRC 12203 / NCIMB 8253 / ATH 2.4.1.) (Rhodobacter sphaeroides), this protein is Translation initiation factor IF-2.